A 274-amino-acid chain; its full sequence is 2-dehydro-3-deoxyphosphooctonate aldolase (274 aa).

The protein belongs to the KdsA family.

The protein resides in the cytoplasm. The enzyme catalyses D-arabinose 5-phosphate + phosphoenolpyruvate + H2O = 3-deoxy-alpha-D-manno-2-octulosonate-8-phosphate + phosphate. Its pathway is carbohydrate biosynthesis; 3-deoxy-D-manno-octulosonate biosynthesis; 3-deoxy-D-manno-octulosonate from D-ribulose 5-phosphate: step 2/3. It participates in bacterial outer membrane biogenesis; lipopolysaccharide biosynthesis. This Legionella pneumophila (strain Corby) protein is 2-dehydro-3-deoxyphosphooctonate aldolase.